The chain runs to 502 residues: Cardiolipin synthase (502 aa).

3 helical membrane passes run 7–27 (VAIL…FWEG), 29–49 (LLGL…LVIS), and 59–79 (IAWL…YLLF). PLD phosphodiesterase domains lie at 237-264 (INFR…GDEY) and 415-442 (EKGF…DMRS). Active-site residues include His-242, Lys-244, Asp-249, His-420, Lys-422, and Asp-427.

Belongs to the phospholipase D family. Cardiolipin synthase subfamily.

The protein localises to the cell membrane. The catalysed reaction is 2 a 1,2-diacyl-sn-glycero-3-phospho-(1'-sn-glycerol) = a cardiolipin + glycerol. Its function is as follows. Catalyzes the reversible phosphatidyl group transfer from one phosphatidylglycerol molecule to another to form cardiolipin (CL) (diphosphatidylglycerol) and glycerol. The polypeptide is Cardiolipin synthase (cls) (Geobacillus kaustophilus (strain HTA426)).